The following is a 299-amino-acid chain: GTPase Era (299 aa).

Positions 8-176 constitute an Era-type G domain; sequence RCGYVAIVGR…EKLVGERLPE (169 aa). Residues 16 to 23 are G1; the sequence is GRPNVGKS. Residue 16-23 coordinates GTP; the sequence is GRPNVGKS. The G2 stretch occupies residues 42 to 46; sequence QTTRH. The segment at 63–66 is G3; sequence DTPG. GTP-binding positions include 63 to 67 and 125 to 128; these read DTPGL and NKAD. A G4 region spans residues 125–128; the sequence is NKAD. The G5 stretch occupies residues 155–157; it reads ISA. Positions 199 to 283 constitute a KH type-2 domain; that stretch reads IREKIMRQLG…MLNLWVKVKG (85 aa).

The protein belongs to the TRAFAC class TrmE-Era-EngA-EngB-Septin-like GTPase superfamily. Era GTPase family. As to quaternary structure, monomer.

The protein resides in the cytoplasm. Its subcellular location is the cell inner membrane. In terms of biological role, an essential GTPase that binds both GDP and GTP, with rapid nucleotide exchange. Plays a role in 16S rRNA processing and 30S ribosomal subunit biogenesis and possibly also in cell cycle regulation and energy metabolism. The chain is GTPase Era from Ectopseudomonas mendocina (strain ymp) (Pseudomonas mendocina).